The primary structure comprises 56 residues: Large ribosomal subunit protein bL32 (56 aa).

The segment at 1 to 36 (MAVQQNKKSRSKRGMRRSHDALSTAQLSVDATSGEV) is disordered. Residues 7–16 (KKSRSKRGMR) show a composition bias toward basic residues. Over residues 21-31 (ALSTAQLSVDA) the composition is skewed to polar residues.

This sequence belongs to the bacterial ribosomal protein bL32 family.

The chain is Large ribosomal subunit protein bL32 from Shewanella oneidensis (strain ATCC 700550 / JCM 31522 / CIP 106686 / LMG 19005 / NCIMB 14063 / MR-1).